Consider the following 242-residue polypeptide: tRNA pseudouridine synthase A (242 aa).

Catalysis depends on aspartate 51, which acts as the Nucleophile. Tyrosine 107 is a substrate binding site.

The protein belongs to the tRNA pseudouridine synthase TruA family. In terms of assembly, homodimer.

It carries out the reaction uridine(38/39/40) in tRNA = pseudouridine(38/39/40) in tRNA. Formation of pseudouridine at positions 38, 39 and 40 in the anticodon stem and loop of transfer RNAs. The protein is tRNA pseudouridine synthase A of Helicobacter pylori (strain G27).